We begin with the raw amino-acid sequence, 133 residues long: UPF0292 protein TON_0187 (133 aa).

A Toprim domain is found at Glu-20–Leu-100. The Mg(2+) site is built by Glu-26, Asp-69, and Asp-71.

Belongs to the UPF0292 family. It depends on Mg(2+) as a cofactor.

The protein is UPF0292 protein TON_0187 of Thermococcus onnurineus (strain NA1).